A 473-amino-acid polypeptide reads, in one-letter code: MAKNIGKITQIISAVVDVKFTNNGELPEILNALECYNDKQRIVLEVAQHIGDDTVRCIAMDSTEGLVRGVEVIDTGSPIRIPVGTETLGRIMNVVGEPIDGKGDIKSSNISSIYKPAPDFTNQSTERNILVTGIKVIDLLAPYTKGGKIGLFGGAGVGKTVLIMELINNVAKAHGGYTVFAGVGERTREGNDLYHEMIDSGVINLAEPEKSKVALVYGQMNEPPGARARVALSGLTIAESFRDMNEGQDVLFFVDNIFRFTQAGSEVSALLGRIPSAVGYQPTLATDMGELQERITSTKYGSITSVQAIYVPADDLTDPAPATSFAHLDATTVLSRQIAELGIYPAVDPLDSNSQVLDPMIVGEEHYSVARQVQQVLQTYKSLQDIIAILGMDELSEEDKLTVVRARKIQRFLSQPFHVAEVFTGAEGKFVNLADTIAGFKGLVEGKYDDLPEAAFYMVGTIDEAIEKAQTLK.

153–160 (GGAGVGKT) is a binding site for ATP.

The protein belongs to the ATPase alpha/beta chains family. As to quaternary structure, F-type ATPases have 2 components, CF(1) - the catalytic core - and CF(0) - the membrane proton channel. CF(1) has five subunits: alpha(3), beta(3), gamma(1), delta(1), epsilon(1). CF(0) has three main subunits: a(1), b(2) and c(9-12). The alpha and beta chains form an alternating ring which encloses part of the gamma chain. CF(1) is attached to CF(0) by a central stalk formed by the gamma and epsilon chains, while a peripheral stalk is formed by the delta and b chains.

It localises to the cell inner membrane. The catalysed reaction is ATP + H2O + 4 H(+)(in) = ADP + phosphate + 5 H(+)(out). Produces ATP from ADP in the presence of a proton gradient across the membrane. The catalytic sites are hosted primarily by the beta subunits. The chain is ATP synthase subunit beta from Rickettsia massiliae (strain Mtu5).